The primary structure comprises 441 residues: Importin subunit alpha-8 (441 aa).

8 ARM repeats span residues 39–79 (QRDI…NIAV), 80–118 (DNPG…NVAG), 121–158 (IHYR…NLCR), 160–199 (KPHP…HLSE), 202–241 (EDGI…AMTA), 244–284 (HQQT…NITA), 287–326 (KEQI…NMAL), and 330–370 (HDQI…NMLK).

The protein belongs to the importin alpha family. In terms of assembly, forms a complex with importin subunit beta-1.

The protein resides in the nucleus envelope. Binds to conventional NLS motifs and mediates nuclear protein import across the nuclear envelope. The polypeptide is Importin subunit alpha-8 (Arabidopsis thaliana (Mouse-ear cress)).